A 567-amino-acid polypeptide reads, in one-letter code: Ran-binding protein 3 (567 aa).

Basic and acidic residues predominate over residues 1 to 10 (MADLANEEKP). Disordered regions lie at residues 1-263 (MADL…FVFG), 332-373 (LSPP…AESA), and 515-567 (VEQE…TGST). A2 carries the post-translational modification N-acetylalanine. 2 positions are modified to N6-acetyllysine: K9 and K21. Basic and acidic residues predominate over residues 39–49 (EEPRGEAEAPH). T75 is subject to Phosphothreonine. The segment covering 75–89 (TPPPPAPEAQLPPFP) has biased composition (pro residues). A phosphoserine mark is found at S100, S101, and S108. The Nuclear localization signal motif lies at 117–125 (PPVKRERTS). Position 124 is a phosphothreonine (T124). Polar residues-rich tracts occupy residues 125 to 134 (SSLTQFPPSQ) and 184 to 197 (ALSQTVPSSGTNGV). S126 is subject to Phosphoserine. A phosphoserine mark is found at S219, S333, S353, S355, and S372. A compositionally biased stretch (low complexity) spans 347–362 (ENAAAESGSESSSQEA). The RanBD1 domain maps to 378–518 (KATARKCLLE…LALRSRVEQE (141 aa)). A compositionally biased stretch (acidic residues) spans 534-544 (NEEDDSDDDDV). Position 539 is a phosphoserine (S539). Over residues 549-567 (GATAAGAGDEGDGQTTGST) the composition is skewed to low complexity.

As to quaternary structure, interacts with CHC1 in a Ran-stimulated manner. Interacts with XPO1. Interacts (via its C-terminal R domain) with SMAD2 (dephosphorylated form via its MH1 and MH2 domains); the interaction results in the nuclear export of SMAD2 and termination of the TGF-beta signaling. Interacts (via its C-terminal R domain) with SMAD3 (dephosphorylated form via its MH1 domain); the interaction results in the nuclear export of SMAD3 and termination of the TGF-beta signaling. Post-translationally, phosphorylation at Ser-126 promotes its import into the nucleus. As to expression, widely expressed with high levels in testis and heart.

It is found in the cytoplasm. The protein localises to the nucleus. In terms of biological role, acts as a cofactor for XPO1/CRM1-mediated nuclear export, perhaps as export complex scaffolding protein. Bound to XPO1/CRM1, stabilizes the XPO1/CRM1-cargo interaction. In the absence of Ran-bound GTP prevents binding of XPO1/CRM1 to the nuclear pore complex. Binds to CHC1/RCC1 and increases the guanine nucleotide exchange activity of CHC1/RCC1. Recruits XPO1/CRM1 to CHC1/RCC1 in a Ran-dependent manner. Negative regulator of TGF-beta signaling through interaction with the R-SMAD proteins, SMAD2 and SMAD3, and mediating their nuclear export. The protein is Ran-binding protein 3 (RANBP3) of Homo sapiens (Human).